The following is a 345-amino-acid chain: MIKLNNIXKIFELPXKKLTALDNVSLNIEKGQICGVIGASGAGKSTLIRCVNLLEKPTSGSVIVDGVELTKLSDRELVLARRQIGMIFQHFNLLSSRTVFENVALPLELESESKAKIQEKITALLDLVGLSEKRDAYPSNLSGGQKQRVAIARALASDPKVLLCDEATSALDPATTQSILKLLKEINRTLGITILLITHEMEVVKQICDQVAVIDQGRLVEQGTVGEIFANPKTELAQEFIRSTFHISLPDEYLENLTDTPKHSKAYPIIKFEFTGRSVDAPLLSQASKKFGVELSILTSQIDYAGGVKFGYTIAEVEGDEDAITQTKVYLMENNVRVEVLGYVQ.

The region spanning 2–241 (IKLNNIXKIF…PKTELAQEFI (240 aa)) is the ABC transporter domain. 38–45 (GASGAGKS) is a binding site for ATP.

Belongs to the ABC transporter superfamily. Methionine importer (TC 3.A.1.24) family. As to quaternary structure, the complex is composed of two ATP-binding proteins (MetN), two transmembrane proteins (MetI) and a solute-binding protein (MetQ).

The protein localises to the cell inner membrane. It carries out the reaction L-methionine(out) + ATP + H2O = L-methionine(in) + ADP + phosphate + H(+). It catalyses the reaction D-methionine(out) + ATP + H2O = D-methionine(in) + ADP + phosphate + H(+). Its function is as follows. Part of the ABC transporter complex MetNIQ involved in methionine import. Responsible for energy coupling to the transport system. The polypeptide is Methionine import ATP-binding protein MetN (Haemophilus influenzae (strain ATCC 51907 / DSM 11121 / KW20 / Rd)).